The following is an 861-amino-acid chain: MQQQYNPSAIESKVQHFWEENKVFKAVKDITKEKYYCLSMLPYPSGRLHMGHVRNYTIGDVISRYQRMIGKNVLQPMGWDAFGLPAEGAAVKNNTAPAKWTYENIEYMKNQLKVLGFSYDWDREITTCRPEYYKWEQWFFTELYKKGLVYKKTSTVNWCPNDETVLANEQVHEGCCWRCDTPVEQRDIPQWFIKITDYAEELLTQLDNLTQWPDQVKTMQRNWIGRSEGVEITFKIAGSNATLPVYTTRPDTFFGVSYLAVAAAHPLAELASTNNPALAEFIREAKNTKVAEAELATMEKKGMPTGLFAIHPLTGKEIPVWVANFVLMHYGTGAVMAVPAHDERDFDFAKKYGLQINQVIQPLDASTWDFSQAAFTEHGKLINSAEFDGLDFNHAFNAIADKLESLGVGKRQVNFRLRDWGVSRQRYWGAPIPMMTTEQGEVVTVPLKDLPVILPENVVMDGVQSPIKSDPEWAKTTYEGQPALKETDTFDTFMESSWYYARYTCPQYHQGMLDADEANYWLPVDQYIGGIEHATMHLLYFRFFHKLLRDAGILTSDEPATKLLCQGMVLADAFYYTSPTNERIWVSPTQVSLERDEKGRIINATDPAGHKLVHSGMTKMSKSKNNGIDPQEMVEKYGADTVRLFMMFASPAEMTLEWQESGVEGAKRFLGRVWNLVYEYVQQPATQALNALELNKAQKELRRDVHKTIAKVSDDIGRRQTFNTAIAAIMELMNKLNKAPLESDQDKAVMAEALSAVVRMLYPITPHICFELWQALGNQQTIDFAPWVVSDETAMIEDEKLVVVQVNGKVRGKITVPANASEDEVKITAKNDANVAKFLADMQIVKEIYIPFKMLNFVVKV.

The 'HIGH' region signature appears at proline 42–histidine 52. The 'KMSKS' region signature appears at lysine 619–serine 623. Lysine 622 provides a ligand contact to ATP.

It belongs to the class-I aminoacyl-tRNA synthetase family.

It is found in the cytoplasm. The enzyme catalyses tRNA(Leu) + L-leucine + ATP = L-leucyl-tRNA(Leu) + AMP + diphosphate. The sequence is that of Leucine--tRNA ligase from Haemophilus ducreyi (strain 35000HP / ATCC 700724).